Here is a 211-residue protein sequence, read N- to C-terminus: Probable oligoribonuclease (211 aa).

The region spanning I38 to L202 is the Exonuclease domain. Y159 is a catalytic residue.

The protein belongs to the oligoribonuclease family.

Its function is as follows. 3'-to-5' exoribonuclease specific for small oligoribonucleotides. The chain is Probable oligoribonuclease from Drosophila melanogaster (Fruit fly).